Here is a 698-residue protein sequence, read N- to C-terminus: ATP-dependent RNA helicase DHX33 (698 aa).

Disordered regions lie at residues 1 to 20 (MPEE…SCPP) and 29 to 50 (TAGG…AQPS). Residues 1 to 71 (MPEEASLPPA…RRSLPIFRAR (71 aa)) are required for nucleolar location. Gly residues predominate over residues 30 to 40 (AGGGGGAGGGR). Residues 75-243 (LAQLRNLDNA…FNRAPVLYLE (169 aa)) enclose the Helicase ATP-binding domain. ATP is bound at residue 88-95 (GETGSGKT). A DEAH box motif is present at residues 185–188 (DEAH). One can recognise a Helicase C-terminal domain in the interval 271–441 (QIHQEAPASQ…SVILQLLAMK (171 aa)). The tract at residues 462–553 (AIAQLDLLGA…ISSEGDHITL (92 aa)) is HA2; required for interaction with EIF3G and RPL26. A Critical for rDNA-binding motif is present at residues 536–550 (VQSVRKKFISSEGDH).

This sequence belongs to the DEAD box helicase family. DEAH subfamily. As to quaternary structure, interacts with UBTF. Interacts with DDX3X, EIF3G and EIF3H; the interaction is independent of RNA. Interacts (via HA2 region and Helicase C-terminal domain) with the components of the large ribosomal subunit RPL3, RPL7, RPL26 and RPL27. Binds to mRNA. Interacts (via the helicase C-terminal domain) with MAVS. Binds to double-stranded RNA (via the helicase C-terminal domain). Ubiquitinated, leading to its degradation by the proteasome. Deubiquitinated by USP36.

Its subcellular location is the nucleus. The protein resides in the nucleolus. It localises to the nucleoplasm. It is found in the cytoplasm. The protein localises to the inflammasome. The catalysed reaction is ATP + H2O = ADP + phosphate + H(+). In terms of biological role, implicated in nucleolar organization, ribosome biogenesis, protein synthesis and cytoplasmic dsRNA sensing. Stimulates RNA polymerase I transcription of the 47S precursor rRNA. Associates with ribosomal DNA (rDNA) loci where it is involved in POLR1A recruitment. In the cytoplasm, promotes elongation-competent 80S ribosome assembly at the late stage of mRNA translation initiation. Senses cytosolic dsRNA mediating NLRP3 inflammasome formation in macrophages and type I interferon production in myeloid dendritic cells. Required for NLRP3 activation induced by viral dsRNA and bacterial RNA. In dendritic cells, required for induction of type I interferon production induced by cytoplasmic dsRNA via the activation of MAPK and NF-kappa-B signaling pathways. The sequence is that of ATP-dependent RNA helicase DHX33 from Mus musculus (Mouse).